Here is a 432-residue protein sequence, read N- to C-terminus: GTPase Obg (432 aa).

Residues 1-158 (MFVDQVKIYV…RNIILELKLL (158 aa)) form the Obg domain. The region spanning 159–329 (ADVGLVGFPS…LLFAIADLLE (171 aa)) is the OBG-type G domain. GTP-binding positions include 165 to 172 (GFPSVGKS), 190 to 194 (FTTLV), 212 to 215 (DLPG), 282 to 285 (NKMD), and 310 to 312 (SAA). Ser-172 and Thr-192 together coordinate Mg(2+). Residues 350 to 428 (KYEKEEPPFT…LLDYEFEFVD (79 aa)) enclose the OCT domain.

Belongs to the TRAFAC class OBG-HflX-like GTPase superfamily. OBG GTPase family. As to quaternary structure, monomer. Mg(2+) is required as a cofactor.

Its subcellular location is the cytoplasm. An essential GTPase which binds GTP, GDP and possibly (p)ppGpp with moderate affinity, with high nucleotide exchange rates and a fairly low GTP hydrolysis rate. Plays a role in control of the cell cycle, stress response, ribosome biogenesis and in those bacteria that undergo differentiation, in morphogenesis control. This Geobacillus kaustophilus (strain HTA426) protein is GTPase Obg.